We begin with the raw amino-acid sequence, 160 residues long: Crossover junction endodeoxyribonuclease RuvC (160 aa).

Catalysis depends on residues Asp9, Glu68, and Asp141. Positions 9, 68, and 141 each coordinate Mg(2+).

This sequence belongs to the RuvC family. As to quaternary structure, homodimer which binds Holliday junction (HJ) DNA. The HJ becomes 2-fold symmetrical on binding to RuvC with unstacked arms; it has a different conformation from HJ DNA in complex with RuvA. In the full resolvosome a probable DNA-RuvA(4)-RuvB(12)-RuvC(2) complex forms which resolves the HJ. Requires Mg(2+) as cofactor.

Its subcellular location is the cytoplasm. The catalysed reaction is Endonucleolytic cleavage at a junction such as a reciprocal single-stranded crossover between two homologous DNA duplexes (Holliday junction).. Functionally, the RuvA-RuvB-RuvC complex processes Holliday junction (HJ) DNA during genetic recombination and DNA repair. Endonuclease that resolves HJ intermediates. Cleaves cruciform DNA by making single-stranded nicks across the HJ at symmetrical positions within the homologous arms, yielding a 5'-phosphate and a 3'-hydroxyl group; requires a central core of homology in the junction. The consensus cleavage sequence is 5'-(A/T)TT(C/G)-3'. Cleavage occurs on the 3'-side of the TT dinucleotide at the point of strand exchange. HJ branch migration catalyzed by RuvA-RuvB allows RuvC to scan DNA until it finds its consensus sequence, where it cleaves and resolves the cruciform DNA. This Campylobacter jejuni subsp. jejuni serotype O:2 (strain ATCC 700819 / NCTC 11168) protein is Crossover junction endodeoxyribonuclease RuvC.